The primary structure comprises 431 residues: MSGSAPSIPNLLTLRGRIGGGGVTRGRYRGVIHRGGRGHGPGAPSASAAHDATIQGTDTDAAVSRLSAVQIGYIDDPYAELFAQSGPGAARRLPIINRGTYARTTAIDKLVDKFLDDTESSPEGRQIVSLGAGTDTRSLRLFSPSAPTPRKRVIYHEIDFPAMCEKKQRIVCSAPQLRSILSDPDSVEELSQHGGGNSWHSKAVAEKHKGSELWVHGLDLRAIAASQQPQQPLPPGVPIGSRGLHASPFTPGSTTQHEEQTEETSLPQQREPLTLTSLNPNLPTLIISECCLCYLPPSTASSIVSFFTTTIQSSLSIVIYEPIKPDDAFGKMMVSNLAAREIRMPTLEVYKEAEDQERRLREAGFSGGEGKGIGGARSKTIEQIWEEWTSQEEKERVDALEGLDEVEEWKLLAGHYIVVWGWRGVGVDLEI.

S-adenosyl-L-methionine-binding positions include Arg103, Gly131, Asp159, and 219 to 220 (DL). Positions 228-268 (QPQQPLPPGVPIGSRGLHASPFTPGSTTQHEEQTEETSLPQ) are disordered. Glu289 provides a ligand contact to S-adenosyl-L-methionine.

It belongs to the methyltransferase superfamily. LCMT family.

It carries out the reaction [phosphatase 2A protein]-C-terminal L-leucine + S-adenosyl-L-methionine = [phosphatase 2A protein]-C-terminal L-leucine methyl ester + S-adenosyl-L-homocysteine. Methylates the carboxyl group of the C-terminal leucine residue of protein phosphatase 2A catalytic subunits to form alpha-leucine ester residues. This chain is Leucine carboxyl methyltransferase 1 (ppm-1), found in Neurospora crassa (strain ATCC 24698 / 74-OR23-1A / CBS 708.71 / DSM 1257 / FGSC 987).